A 243-amino-acid chain; its full sequence is MRKPVIAGNWKMHMTCAQTRDWMGTFLPLISETPDDRHLVIAPPFTAISTLADVGAGSRVEISSQNVHWEGHGAYTGEISPAMLQEHGVRYAIVGHSEPRKYFSESDEQINHRARSAQAHDLIPIVCVGESDEQRSRGEAERVIRRQVEQGLEGLDPQRLVVAYEPIWAIGTGKTCESAEANRICGLIRSWVGSPDLIIQYGGSVKPANIDELMGMSDIDGVLVGGASLDPEGFARIANYKKG.

Asn9–Lys11 is a binding site for substrate. His96 acts as the Electrophile in catalysis. Glu165 (proton acceptor) is an active-site residue. Substrate-binding positions include Gly171, Ser204, and Gly225–Gly226.

The protein belongs to the triosephosphate isomerase family. As to quaternary structure, homodimer.

The protein resides in the cytoplasm. It catalyses the reaction D-glyceraldehyde 3-phosphate = dihydroxyacetone phosphate. Its pathway is carbohydrate biosynthesis; gluconeogenesis. The protein operates within carbohydrate degradation; glycolysis; D-glyceraldehyde 3-phosphate from glycerone phosphate: step 1/1. Its function is as follows. Involved in the gluconeogenesis. Catalyzes stereospecifically the conversion of dihydroxyacetone phosphate (DHAP) to D-glyceraldehyde-3-phosphate (G3P). This chain is Triosephosphate isomerase, found in Synechococcus sp. (strain WH7803).